The primary structure comprises 181 residues: Oligoribonuclease (181 aa).

The Exonuclease domain maps to 8–171; that stretch reads LIWIDLEMTG…DDIRESVAEL (164 aa). Tyr-129 is a catalytic residue.

The protein belongs to the oligoribonuclease family.

It is found in the cytoplasm. 3'-to-5' exoribonuclease specific for small oligoribonucleotides. The protein is Oligoribonuclease of Salmonella choleraesuis (strain SC-B67).